A 200-amino-acid chain; its full sequence is MNDRMVWIDCEMTGLSLSDDALIEVAALVTDSELNILGEGVDIVIRPPERALETMPEVVREMHTASGLLAELDGGTTLADAEAQVLAYVREHVKEPGKAPLCGNSVGTDRGFLLRDMATLEGYLHYRIVDVSSIKELARRWYPRAYFNSPEKNGNHRALADIRESIAELRYYREAVFVPQPGPDSDTARAIAAKHVVSAG.

Residues M5–L169 enclose the Exonuclease domain. Y126 is a catalytic residue.

It belongs to the oligoribonuclease family.

It is found in the cytoplasm. In terms of biological role, 3'-to-5' exoribonuclease specific for small oligoribonucleotides. The protein is Oligoribonuclease of Streptomyces coelicolor (strain ATCC BAA-471 / A3(2) / M145).